The chain runs to 559 residues: CRISPR-associated exonuclease Cas4/endonuclease Cas1 fusion (559 aa).

The tract at residues 1–198 (MAETDGSIPL…RCSLVGICLP (198 aa)) is CRISPR-associated exonuclease Cas4. Cys22 contacts [4Fe-4S] cluster. Mn(2+) is bound by residues Asp87 and Asp100. The [4Fe-4S] cluster site is built by Cys187, Cys190, and Cys196. The interval 224-559 (LYVQSPKAYV…IPAYPNFVTR (336 aa)) is CRISPR-associated endonuclease Cas1. Mn(2+) is bound by residues Glu380, His451, and Glu466.

It in the N-terminal section; belongs to the CRISPR-associated exonuclease Cas4 family. In the C-terminal section; belongs to the CRISPR-associated endonuclease Cas1 family. As to quaternary structure, homodimer, forms a heterotetramer with a Cas2 homodimer. Requires [4Fe-4S] cluster as cofactor. It depends on Mg(2+) as a cofactor. The cofactor is Mn(2+).

It carries out the reaction exonucleolytic cleavage in the 5'- to 3'-direction to yield nucleoside 3'-phosphates.. In terms of biological role, CRISPR (clustered regularly interspaced short palindromic repeat), is an adaptive immune system that provides protection against mobile genetic elements (viruses, transposable elements and conjugative plasmids). CRISPR clusters contain spacers, sequences complementary to antecedent mobile elements, and target invading nucleic acids. CRISPR clusters are transcribed and processed into CRISPR RNA (crRNA). The Cas4 region acts as a ssDNA exonuclease, while the Cas1 region acts as a dsDNA endonuclease. Involved in the integration of spacer DNA into the CRISPR cassette. This chain is CRISPR-associated exonuclease Cas4/endonuclease Cas1 fusion (cas4-cas1), found in Geobacter sulfurreducens (strain ATCC 51573 / DSM 12127 / PCA).